The sequence spans 416 residues: 2-amino-3-ketobutyrate coenzyme A ligase, mitochondrial (416 aa).

The transit peptide at 1–18 directs the protein to the mitochondrion; sequence MWASFMWHGALSPGRRAH. N6-acetyllysine; alternate is present on lysine 42. Residue lysine 42 is modified to N6-succinyllysine; alternate. Pyridoxal 5'-phosphate is bound at residue 131–132; the sequence is CF. Histidine 156 contributes to the substrate binding site. Lysine 184 carries the N6-acetyllysine; alternate modification. An N6-succinyllysine; alternate modification is found at lysine 184. Pyridoxal 5'-phosphate is bound by residues serine 203, 259–262, and 292–293; these read TLGK and SN. An N6-(pyridoxal phosphate)lysine modification is found at lysine 262. Lysine 323 and lysine 365 each carry N6-succinyllysine. N6-acetyllysine; alternate is present on lysine 380. Position 380 is an N6-succinyllysine; alternate (lysine 380). A substrate-binding site is contributed by arginine 386.

Belongs to the class-II pyridoxal-phosphate-dependent aminotransferase family. It depends on pyridoxal 5'-phosphate as a cofactor.

It is found in the mitochondrion. Its subcellular location is the nucleus. The catalysed reaction is glycine + acetyl-CoA = (2S)-2-amino-3-oxobutanoate + CoA. It functions in the pathway amino-acid degradation; L-threonine degradation via oxydo-reductase pathway; glycine from L-threonine: step 2/2. Its function is as follows. Pyridoxal phosphate (PLP) dependent enzyme, which catalyzes the cleavage of 2-amino-3-oxobutanoate to glycine and acetyl-CoA. Catalyzes the second reaction step on the main metabolic degradation pathway for L-threonine. This chain is 2-amino-3-ketobutyrate coenzyme A ligase, mitochondrial (Gcat), found in Mus musculus (Mouse).